Reading from the N-terminus, the 63-residue chain is Rubredoxin-2 (63 aa).

The Rubredoxin-like domain maps to 8–59 (YKLFRCLQCGFEYDEAIGWPDDGIEPGTRWDEIPEDWSCPDCGAAKVDFEMV). 4 residues coordinate Fe cation: C13, C16, C46, and C49.

It belongs to the rubredoxin family. Requires Fe(3+) as cofactor.

Its function is as follows. Involved in the hydrocarbon hydroxylating system, which transfers electrons from NADH to rubredoxin reductase and then through rubredoxin to alkane 1 monooxygenase. The polypeptide is Rubredoxin-2 (rubA2) (Rhodococcus erythropolis (Arthrobacter picolinophilus)).